The sequence spans 252 residues: 2-succinyl-6-hydroxy-2,4-cyclohexadiene-1-carboxylate synthase (252 aa).

Belongs to the AB hydrolase superfamily. MenH family. As to quaternary structure, monomer.

It carries out the reaction 5-enolpyruvoyl-6-hydroxy-2-succinyl-cyclohex-3-ene-1-carboxylate = (1R,6R)-6-hydroxy-2-succinyl-cyclohexa-2,4-diene-1-carboxylate + pyruvate. Its pathway is quinol/quinone metabolism; 1,4-dihydroxy-2-naphthoate biosynthesis; 1,4-dihydroxy-2-naphthoate from chorismate: step 3/7. It participates in quinol/quinone metabolism; menaquinone biosynthesis. In terms of biological role, catalyzes a proton abstraction reaction that results in 2,5-elimination of pyruvate from 2-succinyl-5-enolpyruvyl-6-hydroxy-3-cyclohexene-1-carboxylate (SEPHCHC) and the formation of 2-succinyl-6-hydroxy-2,4-cyclohexadiene-1-carboxylate (SHCHC). The sequence is that of 2-succinyl-6-hydroxy-2,4-cyclohexadiene-1-carboxylate synthase from Escherichia coli O17:K52:H18 (strain UMN026 / ExPEC).